The sequence spans 349 residues: tRNA pseudouridine synthase D (349 aa).

Phe27 is a binding site for substrate. Catalysis depends on Asp80, which acts as the Nucleophile. Asn129 provides a ligand contact to substrate. A TRUD domain is found at 155 to 303; that stretch reads GVPNYFGAQR…VEAARRAMLL (149 aa). Substrate is bound at residue Phe329.

The protein belongs to the pseudouridine synthase TruD family.

It carries out the reaction uridine(13) in tRNA = pseudouridine(13) in tRNA. Functionally, responsible for synthesis of pseudouridine from uracil-13 in transfer RNAs. In Escherichia coli O6:K15:H31 (strain 536 / UPEC), this protein is tRNA pseudouridine synthase D.